Consider the following 427-residue polypeptide: Histidinol dehydrogenase (427 aa).

Substrate is bound by residues serine 232, glutamine 254, and histidine 257. Zn(2+) contacts are provided by glutamine 254 and histidine 257. Active-site proton acceptor residues include glutamate 322 and histidine 323. 4 residues coordinate substrate: histidine 323, aspartate 356, glutamate 410, and histidine 415. Residue aspartate 356 participates in Zn(2+) binding. Residue histidine 415 participates in Zn(2+) binding.

It belongs to the histidinol dehydrogenase family. Zn(2+) serves as cofactor.

It catalyses the reaction L-histidinol + 2 NAD(+) + H2O = L-histidine + 2 NADH + 3 H(+). Its pathway is amino-acid biosynthesis; L-histidine biosynthesis; L-histidine from 5-phospho-alpha-D-ribose 1-diphosphate: step 9/9. In terms of biological role, catalyzes the sequential NAD-dependent oxidations of L-histidinol to L-histidinaldehyde and then to L-histidine. The sequence is that of Histidinol dehydrogenase from Listeria monocytogenes serovar 1/2a (strain ATCC BAA-679 / EGD-e).